We begin with the raw amino-acid sequence, 326 residues long: Nucleoporin NUP57 (326 aa).

Residues 1 to 10 (MFSSLNTRPA) show a composition bias toward polar residues. The tract at residues 1 to 52 (MFSSLNTRPAGQSLFGANTGGGLFGQSLANQPQQQQQPLQQQQQQAAPALGQ) is disordered. The SLFG repeat unit spans residues 13–17 (SLFGA). The stretch at 22-25 (GLFG) is one GLFG repeat. A compositionally biased stretch (low complexity) spans 25 to 52 (GQSLANQPQQQQQPLQQQQQQAAPALGQ). Coiled-coil stretches lie at residues 218–239 (ALSGDEDELKQKLQQIDKTLND) and 280–321 (EEIE…HNPA).

Belongs to the nucleoporin GLFG family. Component of the nuclear pore complex (NPC). NPC constitutes the exclusive means of nucleocytoplasmic transport. NPCs allow the passive diffusion of ions and small molecules and the active, nuclear transport receptor-mediated bidirectional transport of macromolecules such as proteins, RNAs, ribonucleoparticles (RNPs), and ribosomal subunits across the nuclear envelope. Due to its 8-fold rotational symmetry, all subunits are present with 8 copies or multiples thereof.

Its subcellular location is the nucleus. It is found in the nuclear pore complex. It localises to the nucleus membrane. Its function is as follows. Functions as a component of the nuclear pore complex (NPC). NPC components, collectively referred to as nucleoporins (NUPs), can play the role of both NPC structural components and of docking or interaction partners for transiently associated nuclear transport factors. Active directional transport is assured by both, a Phe-Gly (FG) repeat affinity gradient for these transport factors across the NPC and a transport cofactor concentration gradient across the nuclear envelope (GSP1 and GSP2 GTPases associated predominantly with GTP in the nucleus, with GDP in the cytoplasm). NUP57 plays an important role in several nuclear transport pathways including poly(A)+ RNA, tRNA, and pre-ribosome transport. This is Nucleoporin NUP57 (NUP57) from Chaetomium thermophilum (strain DSM 1495 / CBS 144.50 / IMI 039719) (Thermochaetoides thermophila).